A 230-amino-acid polypeptide reads, in one-letter code: RING finger protein 141 (230 aa).

Gly-2 carries the N-myristoyl glycine lipid modification. The RING-type zinc finger occupies 155–192 (CCICMDGRADLILPCAHSFCQKCIDKWSDRHRNCPICR).

It localises to the membrane. May be involved in spermatogenesis. The sequence is that of RING finger protein 141 (RNF141) from Pongo abelii (Sumatran orangutan).